The sequence spans 74 residues: Conotoxin Bu4 (74 aa).

Residues 1–22 (MKLTCVVIVAVLLLTACQLIIA) form the signal peptide. Positions 23-45 (EDSRGTQLHRALRKATKLSVSTR) are excised as a propeptide. Intrachain disulfides connect cysteine 47/cysteine 63, cysteine 54/cysteine 66, and cysteine 62/cysteine 73.

The protein belongs to the conotoxin O1 superfamily. In terms of tissue distribution, expressed by the venom duct.

It is found in the secreted. The chain is Conotoxin Bu4 from Conus bullatus (Bubble cone).